A 90-amino-acid polypeptide reads, in one-letter code: U7-theraphotoxin-Hhn1e (90 aa).

A signal peptide spans 1–19; that stretch reads MKTAIFTVVLALAVFAVLS. Residues 20-50 constitute a propeptide that is removed on maturation; sequence FGWEANEKALSEEFTELIHEKEAASETEARE. Disulfide bonds link Cys51-Cys65, Cys58-Cys70, and Cys64-Cys81.

The protein belongs to the neurotoxin 10 (Hwtx-1) family. 13 (Hntx-13) subfamily. Expressed by the venom gland.

It localises to the secreted. Functionally, ion channel inhibitor. The polypeptide is U7-theraphotoxin-Hhn1e (Cyriopagopus hainanus (Chinese bird spider)).